A 255-amino-acid polypeptide reads, in one-letter code: Adenylate dimethylallyltransferase (255 aa).

The protein belongs to the isopentenyl transferase family.

It carries out the reaction dimethylallyl diphosphate + AMP = N(6)-(dimethylallyl)adenosine 5'-phosphate + diphosphate. Transfers dimethylallyl groups to AMP as part of the biosynthesis of cytokinin phytohormones. The sequence is that of Adenylate dimethylallyltransferase (fas4) from Rhodococcoides fascians (Rhodococcus fascians).